The chain runs to 352 residues: Putative hetero-Diels-Alderase (352 aa).

The N-terminal stretch at 1–20 is a signal peptide; that stretch reads MRYHLSALVLVFTAFRETLT. 6 N-linked (GlcNAc...) asparagine glycosylation sites follow: Asn-26, Asn-41, Asn-47, Asn-135, Asn-211, and Asn-310.

The protein belongs to the eupF Diels-Alderase family.

It functions in the pathway secondary metabolite biosynthesis; terpenoid biosynthesis. Functionally, putative hetero-Diels-Alderase; part of the gene cluster that mediates the biosynthesis of eupenifeldin, a bistropolone meroterpenoid that acts as an antitumor agent. The first step of eupenifeldin biosynthesis is the biosynthesis of 3-methylorcinaldehyde performed by the non-reducing polyketide synthase eupA. Oxidative dearomatization of 3-methylorcinaldehyde likely catalyzed by the FAD-dependent monooxygenase eupB is followed by oxidative ring expansion by the 2-oxoglutarate-dependent dioxygenase eupC to provide the first tropolone metabolite, tropolone stipitaldehyde. In parallel, generation of sesquiterpene alpha-humulene from farnesylpyrophosphate (FPP) is catalyzed by the terpene cyclase eupE. The cytochrome P450 monooxygenase eupD then hydroxylates humulene to humulenol. The putative Diels-Alderase eupF probably catalyzes the formation of the tropolone-humulene skeleton by linking humulenol and the polyketide moiety. The short-chain dehydrogenase/reductase eupG and the flavin-dependent monooxygenase eupH are also essential for eupenifeldin biosynthesis and are likely the additional decorating enzymes of the tropolone-humulene skeleton to produce final eupenifeldin or derivatives. In Phoma sp, this protein is Putative hetero-Diels-Alderase.